Here is a 413-residue protein sequence, read N- to C-terminus: Phosphoribosylamine--glycine ligase (413 aa).

One can recognise an ATP-grasp domain in the interval 108–310; that stretch reads KQLMDKYRIP…LMQLIIDLEN (203 aa). ATP is bound at residue 134–190; sequence VETCDLPIVIKKDGLAAGKGVIIAFTREDALDGVKKIYQEEKGKVVFESYLEGEEFS. Residues Glu280 and Asn282 each contribute to the Mg(2+) site.

Belongs to the GARS family. Mg(2+) serves as cofactor. The cofactor is Mn(2+).

The catalysed reaction is 5-phospho-beta-D-ribosylamine + glycine + ATP = N(1)-(5-phospho-beta-D-ribosyl)glycinamide + ADP + phosphate + H(+). It functions in the pathway purine metabolism; IMP biosynthesis via de novo pathway; N(1)-(5-phospho-D-ribosyl)glycinamide from 5-phospho-alpha-D-ribose 1-diphosphate: step 2/2. The protein is Phosphoribosylamine--glycine ligase of Staphylococcus epidermidis (strain ATCC 12228 / FDA PCI 1200).